Reading from the N-terminus, the 366-residue chain is Galactose-1-phosphate uridylyltransferase (366 aa).

At S27 the chain carries Phosphoserine. Residues C54 and C57 each contribute to the Zn(2+) site. UDP-alpha-D-glucose-binding positions include A63 and 79-80 (ND). H124 serves as a coordination point for Zn(2+). A UDP-alpha-D-glucose-binding site is contributed by N169. H180 is a binding site for Zn(2+). The active-site Tele-UMP-histidine intermediate is H182. Q184 provides a ligand contact to UDP-alpha-D-glucose. Fe cation contacts are provided by E198, H297, H314, and H316. Residues 329-332 (KFLV) and 334-335 (FE) contribute to the UDP-alpha-D-glucose site.

Belongs to the galactose-1-phosphate uridylyltransferase type 1 family. In terms of assembly, homodimer. The cofactor is Zn(2+).

It catalyses the reaction alpha-D-galactose 1-phosphate + UDP-alpha-D-glucose = alpha-D-glucose 1-phosphate + UDP-alpha-D-galactose. Its pathway is carbohydrate metabolism; galactose metabolism. This chain is Galactose-1-phosphate uridylyltransferase (GAL7), found in Saccharomyces cerevisiae (strain ATCC 204508 / S288c) (Baker's yeast).